The sequence spans 373 residues: GDP-mannose 4,6 dehydratase 2 (373 aa).

The segment covering 1-15 (MASENNGSRSDSESI) has biased composition (polar residues). The tract at residues 1 to 21 (MASENNGSRSDSESITAPKAD) is disordered. NADP(+) contacts are provided by residues 35–40 (GITGQD), R60, 91–92 (DL), 113–117 (LAAQS), and Y128. S117 serves as a coordination point for substrate. A substrate-binding site is contributed by S162. S162 is an active-site residue. Catalysis depends on nucleophile residues E164 and Y185. Y185 provides a ligand contact to substrate. K189 is a binding site for NADP(+). N214 provides a ligand contact to substrate. 2 residues coordinate NADP(+): H215 and R220. Substrate is bound by residues 220 to 228 (RGENFVTRK), G247, R253, and 314 to 317 (RPAE).

Belongs to the NAD(P)-dependent epimerase/dehydratase family. GDP-mannose 4,6-dehydratase subfamily. In terms of assembly, homotetramer. Binds to GER1. It depends on NADP(+) as a cofactor. Expressed in roots, flowers, siliques, leaves and stems. Not expressed in the root meristem and the proximal part of the elongation zone, or in emerging lateral roots. Expressed in trichomes and guard cells, and in pollen just before anthesis.

It carries out the reaction GDP-alpha-D-mannose = GDP-4-dehydro-alpha-D-rhamnose + H2O. It functions in the pathway nucleotide-sugar biosynthesis; GDP-L-fucose biosynthesis via de novo pathway; GDP-L-fucose from GDP-alpha-D-mannose: step 1/2. Its function is as follows. Catalyzes the conversion of GDP-D-mannose to GDP-4-dehydro-6-deoxy-D-mannose. The protein is GDP-mannose 4,6 dehydratase 2 (MUR1) of Arabidopsis thaliana (Mouse-ear cress).